We begin with the raw amino-acid sequence, 232 residues long: Ubiquinone biosynthesis O-methyltransferase (232 aa).

Residues arginine 36, glycine 55, aspartate 76, and methionine 120 each coordinate S-adenosyl-L-methionine.

This sequence belongs to the methyltransferase superfamily. UbiG/COQ3 family.

The enzyme catalyses a 3-demethylubiquinol + S-adenosyl-L-methionine = a ubiquinol + S-adenosyl-L-homocysteine + H(+). It catalyses the reaction a 3-(all-trans-polyprenyl)benzene-1,2-diol + S-adenosyl-L-methionine = a 2-methoxy-6-(all-trans-polyprenyl)phenol + S-adenosyl-L-homocysteine + H(+). The protein operates within cofactor biosynthesis; ubiquinone biosynthesis. Its function is as follows. O-methyltransferase that catalyzes the 2 O-methylation steps in the ubiquinone biosynthetic pathway. The polypeptide is Ubiquinone biosynthesis O-methyltransferase (Burkholderia orbicola (strain MC0-3)).